The sequence spans 335 residues: Fructose-1,6-bisphosphatase class 1 (335 aa).

Residues glutamate 92, aspartate 114, leucine 116, and aspartate 117 each contribute to the Mg(2+) site. Substrate contacts are provided by residues 117–120 (DGSS), asparagine 209, and lysine 275. Mg(2+) is bound at residue glutamate 281.

The protein belongs to the FBPase class 1 family. As to quaternary structure, homotetramer. Requires Mg(2+) as cofactor.

The protein resides in the cytoplasm. The enzyme catalyses beta-D-fructose 1,6-bisphosphate + H2O = beta-D-fructose 6-phosphate + phosphate. It participates in carbohydrate biosynthesis; gluconeogenesis. This is Fructose-1,6-bisphosphatase class 1 from Verminephrobacter eiseniae (strain EF01-2).